The following is a 439-amino-acid chain: Methylenetetrahydrofolate--tRNA-(uracil-5-)-methyltransferase TrmFO (439 aa).

9-14 (GAGLAG) contributes to the FAD binding site.

The protein belongs to the MnmG family. TrmFO subfamily. The cofactor is FAD.

It localises to the cytoplasm. It catalyses the reaction uridine(54) in tRNA + (6R)-5,10-methylene-5,6,7,8-tetrahydrofolate + NADH + H(+) = 5-methyluridine(54) in tRNA + (6S)-5,6,7,8-tetrahydrofolate + NAD(+). The catalysed reaction is uridine(54) in tRNA + (6R)-5,10-methylene-5,6,7,8-tetrahydrofolate + NADPH + H(+) = 5-methyluridine(54) in tRNA + (6S)-5,6,7,8-tetrahydrofolate + NADP(+). In terms of biological role, catalyzes the folate-dependent formation of 5-methyl-uridine at position 54 (M-5-U54) in all tRNAs. This chain is Methylenetetrahydrofolate--tRNA-(uracil-5-)-methyltransferase TrmFO, found in Desulforudis audaxviator (strain MP104C).